The sequence spans 206 residues: Probable N-acetyltransferase 14 (206 aa).

The region spanning 9 to 206 is the N-acetyltransferase domain; that stretch reads LSVREMREEE…TIVQEFRKDI (198 aa). 2 helical membrane passes run 37 to 57 and 60 to 80; these read LILYILTRPMTLLLMAVASSG and FILNSFSVALVIPVLLTIVGL.

The protein belongs to the camello family.

It localises to the membrane. Probable acetyltransferase. The polypeptide is Probable N-acetyltransferase 14 (nat14) (Xenopus tropicalis (Western clawed frog)).